A 70-amino-acid polypeptide reads, in one-letter code: Potassium channel toxin kappa-KTx 2.5 (70 aa).

A signal peptide spans 1-26; the sequence is MESSRKSYVLMLFLAFVIMNVCSVSG. Residues 27–42 constitute a propeptide that is removed on maturation; it reads EPKDGEIAGFEMEEAR. Cystine bridges form between Cys-46–Cys-64 and Cys-50–Cys-60.

The protein belongs to the short scorpion toxin superfamily. Potassium channel inhibitor kappa-KTx family. Kappa-KTx 2 subfamily. Expressed by the venom gland.

It is found in the secreted. Its function is as follows. Voltage-independently blocks potassium currents on hKv1.1/KCNA1 (IC(50)=217 uM), and hKv1.4/KCNA4 (IC(50)=71 uM) (expressed in CHO cells). This is Potassium channel toxin kappa-KTx 2.5 from Opisthacanthus cayaporum (South American scorpion).